Reading from the N-terminus, the 199-residue chain is Shikimate kinase (199 aa).

An ATP-binding site is contributed by glycine 14–threonine 19. Serine 18 lines the Mg(2+) pocket. Substrate contacts are provided by aspartate 36, arginine 60, and glycine 82. Arginine 120 contributes to the ATP binding site. Arginine 147 lines the substrate pocket.

It belongs to the shikimate kinase family. Monomer. Mg(2+) serves as cofactor.

It localises to the cytoplasm. It catalyses the reaction shikimate + ATP = 3-phosphoshikimate + ADP + H(+). Its pathway is metabolic intermediate biosynthesis; chorismate biosynthesis; chorismate from D-erythrose 4-phosphate and phosphoenolpyruvate: step 5/7. In terms of biological role, catalyzes the specific phosphorylation of the 3-hydroxyl group of shikimic acid using ATP as a cosubstrate. This chain is Shikimate kinase, found in Chlorobium limicola (strain DSM 245 / NBRC 103803 / 6330).